A 286-amino-acid chain; its full sequence is uncharacterized protein (286 aa).

The AB hydrolase-1 domain occupies 26–268 (PLIILCHGFC…DACHYDIYEG (243 aa)).

This sequence to E.coli YcjY.

This is an uncharacterized protein from Escherichia coli.